We begin with the raw amino-acid sequence, 369 residues long: Molybdenum import ATP-binding protein ModC (369 aa).

Residues 7-243 form the ABC transporter domain; it reads PGQAGIHARF…LDLPMAMTDD (237 aa). 41–48 serves as a coordination point for ATP; it reads GQSGSGKT. Residues 304-369 enclose the Mop domain; that stretch reads EGSILNVLAV…AQIKAVSLLA (66 aa).

Belongs to the ABC transporter superfamily. Molybdate importer (TC 3.A.1.8) family. The complex is composed of two ATP-binding proteins (ModC), two transmembrane proteins (ModB) and a solute-binding protein (ModA).

It is found in the cell inner membrane. It catalyses the reaction molybdate(out) + ATP + H2O = molybdate(in) + ADP + phosphate + H(+). In terms of biological role, part of the ABC transporter complex ModABC involved in molybdenum import. Responsible for energy coupling to the transport system. The polypeptide is Molybdenum import ATP-binding protein ModC (Bordetella pertussis (strain Tohama I / ATCC BAA-589 / NCTC 13251)).